Here is a 233-residue protein sequence, read N- to C-terminus: Hydroxyacylglutathione hydrolase (233 aa).

The Zn(2+) site is built by His52, His54, Asp56, His57, His108, Asp125, and His163.

This sequence belongs to the metallo-beta-lactamase superfamily. Glyoxalase II family. In terms of assembly, monomer. The cofactor is Zn(2+).

It catalyses the reaction an S-(2-hydroxyacyl)glutathione + H2O = a 2-hydroxy carboxylate + glutathione + H(+). It functions in the pathway secondary metabolite metabolism; methylglyoxal degradation; (R)-lactate from methylglyoxal: step 2/2. Thiolesterase that catalyzes the hydrolysis of S-D-lactoyl-glutathione to form glutathione and D-lactic acid. The sequence is that of Hydroxyacylglutathione hydrolase from Pasteurella multocida (strain Pm70).